Consider the following 190-residue polypeptide: Shikimate kinase (190 aa).

Residue 22–27 (GSGKST) coordinates ATP. Ser-26 contacts Mg(2+). Residues Asp-44, Arg-68, and Gly-90 each coordinate substrate. Position 127 (Arg-127) interacts with ATP. Arg-146 contributes to the substrate binding site.

It belongs to the shikimate kinase family. In terms of assembly, monomer. Mg(2+) is required as a cofactor.

It is found in the cytoplasm. The catalysed reaction is shikimate + ATP = 3-phosphoshikimate + ADP + H(+). It functions in the pathway metabolic intermediate biosynthesis; chorismate biosynthesis; chorismate from D-erythrose 4-phosphate and phosphoenolpyruvate: step 5/7. Functionally, catalyzes the specific phosphorylation of the 3-hydroxyl group of shikimic acid using ATP as a cosubstrate. In Microcystis aeruginosa (strain NIES-843 / IAM M-2473), this protein is Shikimate kinase.